Reading from the N-terminus, the 365-residue chain is Chorismate synthase (365 aa).

The NADP(+) site is built by R48 and R54. Residues 131–133 (RSS), 243–244 (NA), G288, 303–307 (KPTSS), and R329 contribute to the FMN site.

It belongs to the chorismate synthase family. Homotetramer. FMNH2 serves as cofactor.

It catalyses the reaction 5-O-(1-carboxyvinyl)-3-phosphoshikimate = chorismate + phosphate. It participates in metabolic intermediate biosynthesis; chorismate biosynthesis; chorismate from D-erythrose 4-phosphate and phosphoenolpyruvate: step 7/7. Catalyzes the anti-1,4-elimination of the C-3 phosphate and the C-6 proR hydrogen from 5-enolpyruvylshikimate-3-phosphate (EPSP) to yield chorismate, which is the branch point compound that serves as the starting substrate for the three terminal pathways of aromatic amino acid biosynthesis. This reaction introduces a second double bond into the aromatic ring system. The chain is Chorismate synthase from Rhizobium etli (strain ATCC 51251 / DSM 11541 / JCM 21823 / NBRC 15573 / CFN 42).